Reading from the N-terminus, the 522-residue chain is Protein nucleotidyltransferase YdiU (522 aa).

ATP contacts are provided by Gly109, Gly111, Arg112, Lys132, Asp144, Gly145, Arg195, and Arg202. The Proton acceptor role is filled by Asp271. Residues Asn272 and Asp281 each contribute to the Mg(2+) site. ATP is bound at residue Asp281.

Belongs to the SELO family. Requires Mg(2+) as cofactor. Mn(2+) serves as cofactor.

The enzyme catalyses L-seryl-[protein] + ATP = 3-O-(5'-adenylyl)-L-seryl-[protein] + diphosphate. It carries out the reaction L-threonyl-[protein] + ATP = 3-O-(5'-adenylyl)-L-threonyl-[protein] + diphosphate. It catalyses the reaction L-tyrosyl-[protein] + ATP = O-(5'-adenylyl)-L-tyrosyl-[protein] + diphosphate. The catalysed reaction is L-histidyl-[protein] + UTP = N(tele)-(5'-uridylyl)-L-histidyl-[protein] + diphosphate. The enzyme catalyses L-seryl-[protein] + UTP = O-(5'-uridylyl)-L-seryl-[protein] + diphosphate. It carries out the reaction L-tyrosyl-[protein] + UTP = O-(5'-uridylyl)-L-tyrosyl-[protein] + diphosphate. Its function is as follows. Nucleotidyltransferase involved in the post-translational modification of proteins. It can catalyze the addition of adenosine monophosphate (AMP) or uridine monophosphate (UMP) to a protein, resulting in modifications known as AMPylation and UMPylation. This is Protein nucleotidyltransferase YdiU from Burkholderia cenocepacia (strain HI2424).